The primary structure comprises 37 residues: MEALVYTFLLVSTLGIIFFAIFFREPPKVPVPTKKAK.

A helical membrane pass occupies residues 3-23; that stretch reads ALVYTFLLVSTLGIIFFAIFF.

This sequence belongs to the PsbT family. In terms of assembly, PSII is composed of 1 copy each of membrane proteins PsbA, PsbB, PsbC, PsbD, PsbE, PsbF, PsbH, PsbI, PsbJ, PsbK, PsbL, PsbM, PsbT, PsbY, PsbZ, Psb30/Ycf12, at least 3 peripheral proteins of the oxygen-evolving complex and a large number of cofactors. It forms dimeric complexes.

Its subcellular location is the plastid. It is found in the chloroplast thylakoid membrane. Found at the monomer-monomer interface of the photosystem II (PS II) dimer, plays a role in assembly and dimerization of PSII. PSII is a light-driven water plastoquinone oxidoreductase, using light energy to abstract electrons from H(2)O, generating a proton gradient subsequently used for ATP formation. This chain is Photosystem II reaction center protein T, found in Cucumis sativus (Cucumber).